The primary structure comprises 254 residues: Alcohol dehydrogenase (254 aa).

Position 10 to 33 (10 to 33) interacts with NAD(+); sequence FVAGLGGIGLDTSREIVKSGPKNL. Serine 138 contributes to the substrate binding site. The active-site Proton acceptor is the tyrosine 151.

The protein belongs to the short-chain dehydrogenases/reductases (SDR) family. Homodimer.

The catalysed reaction is a primary alcohol + NAD(+) = an aldehyde + NADH + H(+). The enzyme catalyses a secondary alcohol + NAD(+) = a ketone + NADH + H(+). The protein is Alcohol dehydrogenase (Adh) of Drosophila affinidisjuncta (Fruit fly).